We begin with the raw amino-acid sequence, 139 residues long: Protein COLD-REGULATED 15A, chloroplastic (139 aa).

A chloroplast-targeting transit peptide spans Met-1–Val-40.

It belongs to the COR15 protein family. Forms homooligomers which interact with potential stromal substrates in the stroma of chloroplasts. Interacts with the galactose headgroup of the chloroplast lipid monogalactosyldiacylglycerol (MGDG).

Its subcellular location is the plastid. It localises to the chloroplast stroma. Functionally, exhibits cryoprotective activity toward stromal substrates (e.g. LDH and rubisco) in chloroplasts and in protoplasts and confers freezing tolerance to plants in a CBF-dependent manner. Protectant against various stresses (e.g. cold, drought and heat stress) by preventing protein aggregation (e.g. LDH) and attenuating enzyme inactivation. Influences the intrinsic curvature of the inner membrane of the chloroplast envelope, and modulates the freeze-induced lamellar-to-hexagonal II phase transitions that occur in regions where the plasma membrane is brought into close apposition with the chloroplast envelope during freeze-induced osmotic contraction. Mediates a shift in the melting curves of phospholipids-containing membranes to lower temperatures. Involved in the regulation of leaf senescence by abscisic acid (ABA) in a VNI2-dependent manner. This is Protein COLD-REGULATED 15A, chloroplastic from Arabidopsis thaliana (Mouse-ear cress).